A 51-amino-acid polypeptide reads, in one-letter code: Proteinase inhibitor PTI (51 aa).

Disulfide bonds link Cys3/Cys40, Cys6/Cys24, Cys7/Cys36, and Cys13/Cys49.

It belongs to the protease inhibitor I20 (potato type II proteinase inhibitor) family.

The protein localises to the secreted. The protein is Proteinase inhibitor PTI of Solanum tuberosum (Potato).